The primary structure comprises 157 residues: Phosphopantetheine adenylyltransferase (157 aa).

Thr10 contacts substrate. Residues 10-11 and His18 contribute to the ATP site; that span reads TF. Lys42, Leu74, and Arg88 together coordinate substrate. ATP contacts are provided by residues 89 to 91, Glu99, and 124 to 130; these read GLR and NAFISSS.

This sequence belongs to the bacterial CoaD family. Homohexamer. Mg(2+) is required as a cofactor.

Its subcellular location is the cytoplasm. It catalyses the reaction (R)-4'-phosphopantetheine + ATP + H(+) = 3'-dephospho-CoA + diphosphate. It functions in the pathway cofactor biosynthesis; coenzyme A biosynthesis; CoA from (R)-pantothenate: step 4/5. Its function is as follows. Reversibly transfers an adenylyl group from ATP to 4'-phosphopantetheine, yielding dephospho-CoA (dPCoA) and pyrophosphate. This Helicobacter acinonychis (strain Sheeba) protein is Phosphopantetheine adenylyltransferase.